The sequence spans 158 residues: C-type lectin BiL (158 aa).

A signal peptide spans 1-23 (MGRFIFVSFGLLVVFLSLSGAKG). Disulfide bonds link Cys-26/Cys-37, Cys-54/Cys-154, Cys-61/Cys-156, and Cys-129/Cys-146. Residues 33–155 (MNGLCYKIFD…CESKNAFLCQ (123 aa)) form the C-type lectin domain. Gln-119, Asp-121, Glu-127, Asn-142, and Asp-143 together coordinate Ca(2+). The short motif at 119 to 121 (QPD) is the Galactose-binding element.

Homodimer; disulfide-linked. In terms of tissue distribution, expressed by the venom gland.

It localises to the secreted. Its function is as follows. Lectin with a hemagglutinating activity that is inhibited by galactose, lactose and EDTA. Is calcium-dependent. Shows effects on the renal function of isolated perfused rat kidneys by increasing both perfusion pressure (PP) and renal vascular resistance (RVR). In addition, the urinary flow and glomerular filtration rate (GFR) decreases significantly. The changes observed may reflect direct injury to the glomerular and tubular renal cells, and the rise in permeability in the glomerular endothelial cells, may be the effect of interactions of C-type lectin with endothelial cells or due to release of other mediators by mesangial, tubular and endothelial cells. In Bothrops insularis (Golden lancehead), this protein is C-type lectin BiL.